A 160-amino-acid polypeptide reads, in one-letter code: Keratin-associated protein 13-4 (160 aa).

A run of 4 repeats spans residues 41-50 (CQLGSSLYRD), 51-60 (CQKTCWEPAS), 61-70 (CQKSCYHPRT), and 77-86 (CQTTCSGSLG). The tract at residues 41–86 (CQLGSSLYRDCQKTCWEPASCQKSCYHPRTSMLCCPCQTTCSGSLG) is 4 X 10 AA approximate repeats.

Belongs to the PMG family. Interacts with hair keratins.

In the hair cortex, hair keratin intermediate filaments are embedded in an interfilamentous matrix, consisting of hair keratin-associated proteins (KRTAP), which are essential for the formation of a rigid and resistant hair shaft through their extensive disulfide bond cross-linking with abundant cysteine residues of hair keratins. The matrix proteins include the high-sulfur and high-glycine-tyrosine keratins. The polypeptide is Keratin-associated protein 13-4 (KRTAP13-4) (Hylobates agilis (Agile gibbon)).